We begin with the raw amino-acid sequence, 297 residues long: Glutamyl-Q tRNA(Asp) synthetase (297 aa).

L-glutamate contacts are provided by residues 9–13 (RFAPS) and Glu-45. The 'HIGH' region signature appears at 12–22 (PSPTGPLHFGS). The Zn(2+) site is built by Cys-101, Cys-103, and Cys-118. Residues Tyr-170 and Arg-188 each coordinate L-glutamate. Positions 226–230 (KLSKS) match the 'KMSKS' region motif. Lys-229 serves as a coordination point for ATP.

The protein belongs to the class-I aminoacyl-tRNA synthetase family. GluQ subfamily. Zn(2+) is required as a cofactor.

Functionally, catalyzes the tRNA-independent activation of glutamate in presence of ATP and the subsequent transfer of glutamate onto a tRNA(Asp). Glutamate is transferred on the 2-amino-5-(4,5-dihydroxy-2-cyclopenten-1-yl) moiety of the queuosine in the wobble position of the QUC anticodon. In Xanthomonas campestris pv. campestris (strain 8004), this protein is Glutamyl-Q tRNA(Asp) synthetase.